Reading from the N-terminus, the 558-residue chain is Protein S10 (558 aa).

Residues 539-558 are disordered; that stretch reads SSNTSSHEHTQKIVLNKVTR.

This is Protein S10 (S10) from Avena sativa (Oat).